The sequence spans 218 residues: Capsid protein (218 aa).

Residue Met-1 is modified to N-acetylmethionine; by host. Residues 1-28 form a disordered region; that stretch reads MDKSESTSAGRNRRRRPRRGSRSAPSSA. Basic residues predominate over residues 11–21; sequence RNRRRRPRRGS.

Belongs to the cucumovirus capsid protein family.

It is found in the virion. Capsid protein. Probably binds RNA and plays a role in packaging. This is Capsid protein from Cucumis sativus (Cucumber).